Consider the following 324-residue polypeptide: Anthranilate phosphoribosyltransferase (324 aa).

5-phospho-alpha-D-ribose 1-diphosphate is bound by residues Gly-72, 75–76 (GD), Thr-80, 82–85 (NVST), 99–107 (KHGNVSVTS), and Ser-111. Residue Gly-72 coordinates anthranilate. Ser-84 serves as a coordination point for Mg(2+). Residue Asn-102 coordinates anthranilate. Arg-157 provides a ligand contact to anthranilate. The Mg(2+) site is built by Asp-215 and Glu-216.

This sequence belongs to the anthranilate phosphoribosyltransferase family. As to quaternary structure, homodimer. Requires Mg(2+) as cofactor.

The enzyme catalyses N-(5-phospho-beta-D-ribosyl)anthranilate + diphosphate = 5-phospho-alpha-D-ribose 1-diphosphate + anthranilate. Its pathway is amino-acid biosynthesis; L-tryptophan biosynthesis; L-tryptophan from chorismate: step 2/5. Its function is as follows. Catalyzes the transfer of the phosphoribosyl group of 5-phosphorylribose-1-pyrophosphate (PRPP) to anthranilate to yield N-(5'-phosphoribosyl)-anthranilate (PRA). The sequence is that of Anthranilate phosphoribosyltransferase from Pyrococcus furiosus (strain ATCC 43587 / DSM 3638 / JCM 8422 / Vc1).